A 280-amino-acid chain; its full sequence is Hydrolase MT0498 (280 aa).

In terms of domain architecture, CN hydrolase spans 1-251 (MRIALAQIRS…PQLLVADIDV (251 aa)). Residue Glu40 is the Proton acceptor of the active site. Residue Lys110 is the Proton donor of the active site. Cys146 (nucleophile) is an active-site residue.

Belongs to the carbon-nitrogen hydrolase superfamily. NIT1/NIT2 family.

The chain is Hydrolase MT0498 from Mycobacterium tuberculosis (strain CDC 1551 / Oshkosh).